Reading from the N-terminus, the 142-residue chain is Large ribosomal subunit protein uL16 (142 aa).

The protein belongs to the universal ribosomal protein uL16 family. As to quaternary structure, part of the 50S ribosomal subunit.

Binds 23S rRNA and is also seen to make contacts with the A and possibly P site tRNAs. This chain is Large ribosomal subunit protein uL16, found in Thermosipho melanesiensis (strain DSM 12029 / CIP 104789 / BI429).